The sequence spans 85 residues: Inhibitor of dGTPase (85 aa).

Interacts with host dGTPase/dgt.

Functionally, plays a role in increasing the intracellular pool of dGTP. Interacts with and inhibits host dGTPase/dgt. The complex made of the host dGTPase and gene 1.2 protein creates a GTP-binding site of high affinity. Subsequent binding of GTP to the enzyme-inhibitor complex inhibits its dissociation. This is Inhibitor of dGTPase from Escherichia coli (Bacteriophage T7).